The following is a 500-amino-acid chain: Phenylalanine--tRNA ligase alpha subunit (500 aa).

Residues Thr343, 382 to 384 (QVD), and Phe423 contribute to the L-phenylalanine site. Residue Glu425 participates in Mg(2+) binding. Phe448 is an L-phenylalanine binding site.

The protein belongs to the class-II aminoacyl-tRNA synthetase family. Phe-tRNA synthetase alpha subunit type 2 subfamily. In terms of assembly, tetramer of two alpha and two beta subunits. It depends on Mg(2+) as a cofactor.

The protein localises to the cytoplasm. The catalysed reaction is tRNA(Phe) + L-phenylalanine + ATP = L-phenylalanyl-tRNA(Phe) + AMP + diphosphate + H(+). This is Phenylalanine--tRNA ligase alpha subunit from Thermococcus onnurineus (strain NA1).